The following is a 163-amino-acid chain: Probable phosphotransferase enzyme IIB component M6_Spy0801 (163 aa).

The region spanning Met1–Asn163 is the PTS EIIB type-4 domain. His13 (pros-phosphohistidine intermediate) is an active-site residue.

Its subcellular location is the cytoplasm. The phosphoenolpyruvate-dependent sugar phosphotransferase system (sugar PTS), a major carbohydrate active -transport system, catalyzes the phosphorylation of incoming sugar substrates concomitantly with their translocation across the cell membrane. This is Probable phosphotransferase enzyme IIB component M6_Spy0801 from Streptococcus pyogenes serotype M6 (strain ATCC BAA-946 / MGAS10394).